A 289-amino-acid chain; its full sequence is Acetyl-coenzyme A carboxylase carboxyl transferase subunit beta (289 aa).

Residues 23 to 289 enclose the CoA carboxyltransferase N-terminal domain; that stretch reads HWIKCPSCSA…YDENPCLLHL (267 aa). Residues Cys27, Cys30, Cys46, and Cys49 each contribute to the Zn(2+) site. The C4-type zinc finger occupies 27-49; it reads CPSCSALMYYKEVIAQHHVCPKC.

It belongs to the AccD/PCCB family. Acetyl-CoA carboxylase is a heterohexamer composed of biotin carboxyl carrier protein (AccB), biotin carboxylase (AccC) and two subunits each of ACCase subunit alpha (AccA) and ACCase subunit beta (AccD). Zn(2+) serves as cofactor.

It is found in the cytoplasm. It carries out the reaction N(6)-carboxybiotinyl-L-lysyl-[protein] + acetyl-CoA = N(6)-biotinyl-L-lysyl-[protein] + malonyl-CoA. The protein operates within lipid metabolism; malonyl-CoA biosynthesis; malonyl-CoA from acetyl-CoA: step 1/1. Its function is as follows. Component of the acetyl coenzyme A carboxylase (ACC) complex. Biotin carboxylase (BC) catalyzes the carboxylation of biotin on its carrier protein (BCCP) and then the CO(2) group is transferred by the transcarboxylase to acetyl-CoA to form malonyl-CoA. This chain is Acetyl-coenzyme A carboxylase carboxyl transferase subunit beta, found in Wolinella succinogenes (strain ATCC 29543 / DSM 1740 / CCUG 13145 / JCM 31913 / LMG 7466 / NCTC 11488 / FDC 602W) (Vibrio succinogenes).